A 328-amino-acid chain; its full sequence is Alcohol-sensitive RING finger protein 1 (328 aa).

Residues 18-61 form an RING-type 1; atypical zinc finger; the sequence is CSICWESMPSGVGRLMPCGHEYHLACIRKWFHLHSGNRSCPVCR. The RING-type 2; atypical zinc-finger motif lies at 129 to 177; sequence CGICGEMNGDIDTCCNRCHHMYHHSCLGQLLVEVNAEREQGWSHCIFCY.

Its subcellular location is the cytoplasm. The protein resides in the nucleus. Functionally, required for tolerance to alcohol. This Eremothecium gossypii (strain ATCC 10895 / CBS 109.51 / FGSC 9923 / NRRL Y-1056) (Yeast) protein is Alcohol-sensitive RING finger protein 1 (ASR1).